The sequence spans 147 residues: Ubiquitin-conjugating enzyme E2 D2 (147 aa).

The 147-residue stretch at 1–147 (MALKRIHKEL…SREWTQKYAM (147 aa)) folds into the UBC core domain. Cysteine 85 serves as the catalytic Glycyl thioester intermediate.

Belongs to the ubiquitin-conjugating enzyme family. In terms of assembly, interacts with SCF (SKP1-CUL1-F-box protein) E3 ubiquitin ligase complex. Interacts with CNOT4 (via RING domain). Interacts with E3 ubiquitin-protein ligases CBLC, PJA1 and PJA2. Interacts with PDZRN3. Interacts with PPP1R11. Interacts with E3 ubiquitin-protein ligase PHF7; the interaction inhibits cleavage of PHF7 and promotes association of the complex with the nucleosome core particle.

The enzyme catalyses S-ubiquitinyl-[E1 ubiquitin-activating enzyme]-L-cysteine + [E2 ubiquitin-conjugating enzyme]-L-cysteine = [E1 ubiquitin-activating enzyme]-L-cysteine + S-ubiquitinyl-[E2 ubiquitin-conjugating enzyme]-L-cysteine.. The catalysed reaction is S-ubiquitinyl-[E1 ubiquitin-activating enzyme]-L-cysteine + [acceptor protein]-L-lysine = [E1 ubiquitin-activating enzyme]-L-cysteine + N(6)-monoubiquitinyl-[acceptor protein]-L-lysine.. It functions in the pathway protein modification; protein ubiquitination. In terms of biological role, accepts ubiquitin from the E1 complex and catalyzes its covalent attachment to other proteins. In vitro catalyzes 'Lys-48'-linked polyubiquitination. Mediates the selective degradation of short-lived and abnormal proteins. Functions in the E6/E6-AP-induced ubiquitination of p53/TP53. Mediates ubiquitination of PEX5 and SQSTM1 and autoubiquitination of STUB1 and TRAF6. Involved in the signal-induced conjugation and subsequent degradation of NFKBIA, FBXW2-mediated GCM1 ubiquitination and degradation, MDM2-dependent degradation of p53/TP53 and the activation of MAVS in the mitochondria by RIGI in response to viral infection. Essential for viral activation of IRF3. In Sus scrofa (Pig), this protein is Ubiquitin-conjugating enzyme E2 D2 (UBE2D2).